The following is a 151-amino-acid chain: MEYVLEVKNSPRHLLKQFTVCDVPLYDICDYNVSRDRCQELGCCFYEGVCYKKAVPIYIHVFSALIVIIAGAFVITIIYRVIQESRKEKAIPVDVALPQKSSEKAELASSSSKLGLKPASPGPPSAGPSMKSDEDKDDVTGTITEAEETED.

Topologically, residues 1–56 (MEYVLEVKNSPRHLLKQFTVCDVPLYDICDYNVSRDRCQELGCCFYEGVCYKKAVP) are extracellular. A helical transmembrane segment spans residues 57 to 77 (IYIHVFSALIVIIAGAFVITI). At 78-151 (IYRVIQESRK…TITEAEETED (74 aa)) the chain is on the cytoplasmic side. A disordered region spans residues 100 to 151 (KSSEKAELASSSSKLGLKPASPGPPSAGPSMKSDEDKDDVTGTITEAEETED). Over residues 107-119 (LASSSSKLGLKPA) the composition is skewed to low complexity.

Its subcellular location is the membrane. The chain is Testis-expressed protein 29 (TEX29) from Homo sapiens (Human).